The chain runs to 867 residues: Probable beta-glucosidase A (867 aa).

The signal sequence occupies residues 1–18 (MRFSWLEVAVTAASLANA). N-linked (GlcNAc...) asparagine glycosylation is found at Asn-67, Asn-218, and Asn-259. Residue Asp-287 is part of the active site. N-linked (GlcNAc...) asparagine glycans are attached at residues Asn-322, Asn-329, Asn-361, Asn-449, Asn-530, Asn-549, Asn-571, Asn-675, and Asn-719.

It belongs to the glycosyl hydrolase 3 family.

The protein localises to the secreted. It carries out the reaction Hydrolysis of terminal, non-reducing beta-D-glucosyl residues with release of beta-D-glucose.. The protein operates within glycan metabolism; cellulose degradation. In terms of biological role, beta-glucosidases are one of a number of cellulolytic enzymes involved in the degradation of cellulosic biomass. Catalyzes the last step releasing glucose from the inhibitory cellobiose. The chain is Probable beta-glucosidase A (bglA) from Aspergillus clavatus (strain ATCC 1007 / CBS 513.65 / DSM 816 / NCTC 3887 / NRRL 1 / QM 1276 / 107).